Here is a 174-residue protein sequence, read N- to C-terminus: uncharacterized protein (174 aa).

This is an uncharacterized protein from Rickettsia conorii (strain ATCC VR-613 / Malish 7).